A 20-amino-acid chain; its full sequence is Cathepsin L1 (20 aa).

Residues 1-10 (AVPDKIDPRE) are compositionally biased toward basic and acidic residues. A disordered region spans residues 1–20 (AVPDKIDPRESGYVTGVKDQ).

This sequence belongs to the peptidase C1 family. Dimer of a heavy and a light chain linked by disulfide bonds.

It is found in the lysosome. The enzyme catalyses Specificity close to that of papain. As compared to cathepsin B, cathepsin L exhibits higher activity toward protein substrates, but has little activity on Z-Arg-Arg-NHMec, and no peptidyl-dipeptidase activity.. In terms of biological role, thiol protease that assists the parasite in burrowing through the gut wall and liver of its mammalian host. The protein is Cathepsin L1 of Fasciola hepatica (Liver fluke).